The sequence spans 783 residues: MPGPPATAPPPEPIERPPTPPPPPPEDSAAPPPPPDMSAPPPPPQDELPPAPEPKKKKLGWGSKRPAAAPLSVEELVRKKREADAAAAKPKFLSKKEREKIALEKRAKEVEQSRRKTSTNGASDTASVRSESATPNGVDRTASIPTGPRAMRTSEAPPPPRPRHDSSSNGNGNSNSNSNSNGTVDEDEAAAQAALVKQRYMGAEMTSSFSAKKKRKRTTDRKFNFEWNAEEDTSRDYNPLYAQRHEANFFGRGRLAGFGDDVADGVARKYAAALEDRDREAGSVRAREILEMERRRREESTRNQLDKHWSEKKLEHMRERDWRIFKEDFNIATKGGSVPNPMRSWAESGLPSRLLDLVHRVGYKDPTPIQRAAIPIAMQSRDLIGVAVTGSGKTAAFLLPLLVYIAELPRIDEFEWRKNDGPYAIVLAPTRELAQQIEIEAKKFTIPLGFTVVSIVGGHSLEEQAYSLRNGAEIIIATPGRLVDCIERRLLVLSQCCYVIMDEADRMIDLGFEEPVNKILDALPVSNEKPDSDAAENAAAMSQLHHAGGGRDTRYRQTMMYTATMPTAVERIARKYLRRPAIVTIGSAGEAVDTVEQRVELIAGEDKRKKRLGDILSSGEFRPPIIVFVNIKRNCDAIAREIKQWGFSSVTLHGSKTQEQREAALASVRNGSTDVLVATDLAGRGIDVPDVSLVVNFNMATSIESYTHRIGRTGRAGKSGVAITFLGNEDADVMYDLKQMLIKSPISRVPDELRKHEAAQQKPTRGFSKKNDESSAFGGKGGW.

The segment covering 1–52 (MPGPPATAPPPEPIERPPTPPPPPPEDSAAPPPPPDMSAPPPPPQDELPPAP) has biased composition (pro residues). The interval 1–193 (MPGPPATAPP…VDEDEAAAQA (193 aa)) is disordered. Basic and acidic residues-rich tracts occupy residues 75-84 (ELVRKKREAD) and 94-114 (SKKEREKIALEKRAKEVEQSR). The segment covering 118 to 135 (STNGASDTASVRSESATP) has biased composition (polar residues). Over residues 167 to 182 (SSNGNGNSNSNSNSNG) the composition is skewed to low complexity. The short motif at 343–371 (RSWAESGLPSRLLDLVHRVGYKDPTPIQR) is the Q motif element. A Helicase ATP-binding domain is found at 374 to 583 (IPIAMQSRDL…RKYLRRPAIV (210 aa)). 387–394 (AVTGSGKT) serves as a coordination point for ATP. The short motif at 502–505 (DEAD) is the DEAD box element. One can recognise a Helicase C-terminal domain in the interval 594-757 (TVEQRVELIA…RVPDELRKHE (164 aa)). The disordered stretch occupies residues 752-783 (ELRKHEAAQQKPTRGFSKKNDESSAFGGKGGW).

It belongs to the DEAD box helicase family. DDX23/PRP28 subfamily. Component of the U5 snRNP complex.

It localises to the cytoplasm. The protein resides in the nucleus. It carries out the reaction ATP + H2O = ADP + phosphate + H(+). ATP-dependent RNA helicase involved in mRNA splicing. May destabilize the U1/5'-splice site duplex to permit an effective competition for the 5'-splice site by the U6 snRNA, resulting in the switch between U1 and U6 at the 5'-splice site. May also act to unwind the U4/U6 base-pairing interaction in the U4/U6/U5 snRNP, facilitating the first covalent step of splicing. This chain is Pre-mRNA-splicing ATP-dependent RNA helicase prp28 (prp28), found in Aspergillus terreus (strain NIH 2624 / FGSC A1156).